Reading from the N-terminus, the 271-residue chain is Putative pyruvate, phosphate dikinase regulatory protein (271 aa).

147–154 is an ADP binding site; sequence GLSRTSKT.

Belongs to the pyruvate, phosphate/water dikinase regulatory protein family. PDRP subfamily.

It carries out the reaction N(tele)-phospho-L-histidyl/L-threonyl-[pyruvate, phosphate dikinase] + ADP = N(tele)-phospho-L-histidyl/O-phospho-L-threonyl-[pyruvate, phosphate dikinase] + AMP + H(+). It catalyses the reaction N(tele)-phospho-L-histidyl/O-phospho-L-threonyl-[pyruvate, phosphate dikinase] + phosphate + H(+) = N(tele)-phospho-L-histidyl/L-threonyl-[pyruvate, phosphate dikinase] + diphosphate. Its function is as follows. Bifunctional serine/threonine kinase and phosphorylase involved in the regulation of the pyruvate, phosphate dikinase (PPDK) by catalyzing its phosphorylation/dephosphorylation. The protein is Putative pyruvate, phosphate dikinase regulatory protein of Clostridium tetani (strain Massachusetts / E88).